A 301-amino-acid polypeptide reads, in one-letter code: Protein KTI12 homolog (301 aa).

8–15 (GQPCSGKS) is a binding site for ATP. The calmodulin-binding stretch occupies residues 262–275 (LRRTFIKLAGQYSL).

This sequence belongs to the KTI12 family. In terms of assembly, interacts with the elongator complex. Binds to calmodulin in a calcium-dependent manner.

Its subcellular location is the cytoplasm. The protein resides in the nucleus. Functionally, elongator complex-associated factor that is not a structural subunit but rather transiently contacts the complex. Regulates both meristem activity and organ growth; acts as a positive regulator of adaxial leaf patterning. Required for an early step in synthesis of 5-carbamoylmethyl (ncm5) groups present on uridines (ncm5U) at the wobble position in tRNA. This Oryza sativa subsp. indica (Rice) protein is Protein KTI12 homolog.